The primary structure comprises 547 residues: MRVNLLITMIIFALIWPVTALRAAVSKTTWADAPAREFVFVENNSDDNFFVTPGGALDPRLTGANRWTGLKYTGSGTIYQQSLGYIDNGYNTGLYTNWKFDMWLENSPVSSPLTGLRCINWYAGCNMTTSLILPQTTDASGFYGATVTSGGAKWMHGMLSDAFYQYMQQMPVGSSFTMTINACQTSVNYDASSGARCKDQASGNWYVRNVTHTKAANLRLINTHSLAEVFINSDGVPTLGEGNADCRTQTIGSRSGLSCKMVNYTLQTNGLSNTSIHIFPAIANSSLASAVGAYDMQFSLNGSSWKPVSNTAYYYTFNEMKSADSIYVFFSSNFFKQMVNLGISDINTKDLFNFRFQNTTSPESGWYEFSTSNTLIIKPRDFSISIISDEYTQTPSREGYVGSGESALDFGYIVTTSGKTAADEVLIKVTGPAQVIGGRSYCVFSSDDGKAKVPFPATLSFITRNGATKTYDAGCDDSWRDMTDALWLTTPWTDISGEVGQMDKTTVKFSIPMDNAISLRTVDDNGWFGEVSASGEIHVQATWRNIN.

A signal peptide spans 1-23 (MRVNLLITMIIFALIWPVTALRA).

The protein belongs to the EcpD/MatE family. In terms of assembly, forms polymers. Interacts with EcpA.

The protein localises to the fimbrium. In terms of biological role, part of the ecpRABCDE operon, which encodes the E.coli common pilus (ECP). ECP is found in both commensal and pathogenic strains and plays a dual role in early-stage biofilm development and host cell recognition. Tip pilus adhesin, which is required for assembly of EcpA into fibers. The protein is Fimbria adhesin EcpD (ecpD) of Escherichia coli (strain K12).